Consider the following 32-residue polypeptide: Chaperone protein DnaK (32 aa).

It belongs to the heat shock protein 70 family.

Functionally, acts as a chaperone. The chain is Chaperone protein DnaK from Anabaena sp. (strain L31).